The primary structure comprises 308 residues: Aspartate carbamoyltransferase catalytic subunit (308 aa).

2 residues coordinate carbamoyl phosphate: Arg-58 and Thr-59. Lys-86 lines the L-aspartate pocket. Residues Arg-108, His-136, and Gln-139 each contribute to the carbamoyl phosphate site. The L-aspartate site is built by Arg-169 and Arg-227. Gly-268 and Pro-269 together coordinate carbamoyl phosphate.

Belongs to the aspartate/ornithine carbamoyltransferase superfamily. ATCase family. In terms of assembly, heterododecamer (2C3:3R2) of six catalytic PyrB chains organized as two trimers (C3), and six regulatory PyrI chains organized as three dimers (R2).

The catalysed reaction is carbamoyl phosphate + L-aspartate = N-carbamoyl-L-aspartate + phosphate + H(+). It functions in the pathway pyrimidine metabolism; UMP biosynthesis via de novo pathway; (S)-dihydroorotate from bicarbonate: step 2/3. Catalyzes the condensation of carbamoyl phosphate and aspartate to form carbamoyl aspartate and inorganic phosphate, the committed step in the de novo pyrimidine nucleotide biosynthesis pathway. This Chloroflexus aurantiacus (strain ATCC 29366 / DSM 635 / J-10-fl) protein is Aspartate carbamoyltransferase catalytic subunit.